The sequence spans 54 residues: Hemoglobin subunit omega (54 aa).

The 53-residue stretch at 2–54 (HWTAEEKQIILAIWAKIDIEEAGAAALSRLLVVYPWTQRYFKNFGNLSSPTAI) folds into the Globin domain.

Belongs to the globin family.

Its function is as follows. Hemoglobin omega chain is an embryonic-type beta-type chain found in prenatal and neonatal marsupials. This is Hemoglobin subunit omega from Notamacropus eugenii (Tammar wallaby).